The sequence spans 96 residues: Co-chaperonin GroES (96 aa).

Belongs to the GroES chaperonin family. In terms of assembly, heptamer of 7 subunits arranged in a ring. Interacts with the chaperonin GroEL.

The protein resides in the cytoplasm. Its function is as follows. Together with the chaperonin GroEL, plays an essential role in assisting protein folding. The GroEL-GroES system forms a nano-cage that allows encapsulation of the non-native substrate proteins and provides a physical environment optimized to promote and accelerate protein folding. GroES binds to the apical surface of the GroEL ring, thereby capping the opening of the GroEL channel. This Acinetobacter baumannii (strain AB307-0294) protein is Co-chaperonin GroES.